Reading from the N-terminus, the 350-residue chain is Anthranilate phosphoribosyltransferase (350 aa).

5-phospho-alpha-D-ribose 1-diphosphate-binding positions include glycine 94, 97–98 (GD), threonine 102, 104–107 (NIST), 122–130 (KHGNRSVSS), and serine 134. Glycine 94 contributes to the anthranilate binding site. Serine 106 provides a ligand contact to Mg(2+). Asparagine 125 is a binding site for anthranilate. Arginine 180 is a binding site for anthranilate. The Mg(2+) site is built by aspartate 239 and glutamate 240.

It belongs to the anthranilate phosphoribosyltransferase family. Homodimer. The cofactor is Mg(2+).

It catalyses the reaction N-(5-phospho-beta-D-ribosyl)anthranilate + diphosphate = 5-phospho-alpha-D-ribose 1-diphosphate + anthranilate. The protein operates within amino-acid biosynthesis; L-tryptophan biosynthesis; L-tryptophan from chorismate: step 2/5. Catalyzes the transfer of the phosphoribosyl group of 5-phosphorylribose-1-pyrophosphate (PRPP) to anthranilate to yield N-(5'-phosphoribosyl)-anthranilate (PRA). In Geotalea daltonii (strain DSM 22248 / JCM 15807 / FRC-32) (Geobacter daltonii), this protein is Anthranilate phosphoribosyltransferase.